The following is a 235-amino-acid chain: Segregation and condensation protein A (235 aa).

Belongs to the ScpA family. In terms of assembly, component of a cohesin-like complex composed of ScpA, ScpB and the Smc homodimer, in which ScpA and ScpB bind to the head domain of Smc. The presence of the three proteins is required for the association of the complex with DNA.

Its subcellular location is the cytoplasm. Functionally, participates in chromosomal partition during cell division. May act via the formation of a condensin-like complex containing Smc and ScpB that pull DNA away from mid-cell into both cell halves. This is Segregation and condensation protein A from Streptococcus uberis (strain ATCC BAA-854 / 0140J).